We begin with the raw amino-acid sequence, 122 residues long: Selenoprotein H (122 aa).

Lys20 is modified (N6-acetyllysine). Positions Cys41–Sec44 form a cross-link, cysteinyl-selenocysteine (Cys-Sec); redox-active. Residue Sec44 is a non-standard amino acid, selenocysteine.

The protein belongs to the SelWTH family.

May be involved in a redox-related process. This Homo sapiens (Human) protein is Selenoprotein H.